The primary structure comprises 638 residues: Threonine--tRNA ligase (638 aa).

The TGS domain occupies 1–61; it reads MPIITLPDGS…NKDSKVVIIT (61 aa). Residues 242–533 are catalytic; sequence DHRKLGKKHS…LIEQYEAKFP (292 aa). Zn(2+)-binding residues include Cys333, His384, and His510.

Belongs to the class-II aminoacyl-tRNA synthetase family. In terms of assembly, homodimer. The cofactor is Zn(2+).

It is found in the cytoplasm. It catalyses the reaction tRNA(Thr) + L-threonine + ATP = L-threonyl-tRNA(Thr) + AMP + diphosphate + H(+). Catalyzes the attachment of threonine to tRNA(Thr) in a two-step reaction: L-threonine is first activated by ATP to form Thr-AMP and then transferred to the acceptor end of tRNA(Thr). Also edits incorrectly charged L-seryl-tRNA(Thr). This Prochlorococcus marinus (strain MIT 9301) protein is Threonine--tRNA ligase.